The chain runs to 265 residues: 5'-nucleotidase SurE (265 aa).

A divalent metal cation is bound by residues Asp-9, Asp-10, Ser-40, and Asn-96.

It belongs to the SurE nucleotidase family. Requires a divalent metal cation as cofactor.

It localises to the cytoplasm. The enzyme catalyses a ribonucleoside 5'-phosphate + H2O = a ribonucleoside + phosphate. Functionally, nucleotidase that shows phosphatase activity on nucleoside 5'-monophosphates. The chain is 5'-nucleotidase SurE from Methanothrix thermoacetophila (strain DSM 6194 / JCM 14653 / NBRC 101360 / PT) (Methanosaeta thermophila).